Here is a 667-residue protein sequence, read N- to C-terminus: Transketolase 2 (667 aa).

Residue His-25 participates in substrate binding. Residues His-65 and 113–115 (GPL) contribute to the thiamine diphosphate site. Asp-154 contacts Mg(2+). Gly-155 and Asn-184 together coordinate thiamine diphosphate. Mg(2+) is bound by residues Asn-184 and Ile-186. His-260 provides a ligand contact to substrate. His-260 is a binding site for thiamine diphosphate. An N6-acetyllysine modification is found at Lys-342. 2 residues coordinate substrate: Arg-357 and Ser-384. The active-site Proton donor is the Glu-410. Residue Phe-436 coordinates thiamine diphosphate. Substrate-binding residues include His-460, Asp-468, and Arg-519.

The protein belongs to the transketolase family. Homodimer. Requires Mg(2+) as cofactor. Ca(2+) serves as cofactor. It depends on Mn(2+) as a cofactor. Co(2+) is required as a cofactor. The cofactor is thiamine diphosphate.

The enzyme catalyses D-sedoheptulose 7-phosphate + D-glyceraldehyde 3-phosphate = aldehydo-D-ribose 5-phosphate + D-xylulose 5-phosphate. Functionally, catalyzes the reversible transfer of a two-carbon ketol group from sedoheptulose-7-phosphate to glyceraldehyde-3-phosphate, producing xylulose-5-phosphate and ribose-5-phosphate. Catalyzes the transfer of a two-carbon ketol group from a ketose donor to an aldose acceptor, via a covalent intermediate with the cofactor thiamine pyrophosphate. The sequence is that of Transketolase 2 from Escherichia coli (strain K12).